The following is a 367-amino-acid chain: Glutamate 5-kinase (367 aa).

Lysine 10 provides a ligand contact to ATP. The substrate site is built by serine 50, aspartate 137, and asparagine 149. ATP contacts are provided by residues 169-170 (TD) and 211-217 (TGGMATK). Positions 275 to 353 (AGEITVDDGA…QQISEILGYE (79 aa)) constitute a PUA domain.

It belongs to the glutamate 5-kinase family.

The protein localises to the cytoplasm. The enzyme catalyses L-glutamate + ATP = L-glutamyl 5-phosphate + ADP. The protein operates within amino-acid biosynthesis; L-proline biosynthesis; L-glutamate 5-semialdehyde from L-glutamate: step 1/2. Catalyzes the transfer of a phosphate group to glutamate to form L-glutamate 5-phosphate. The chain is Glutamate 5-kinase from Yersinia enterocolitica serotype O:8 / biotype 1B (strain NCTC 13174 / 8081).